The primary structure comprises 90 residues: uncharacterized protein (90 aa).

This is an uncharacterized protein from Saccharomyces cerevisiae (strain ATCC 204508 / S288c) (Baker's yeast).